The following is a 202-amino-acid chain: Superoxide dismutase [Mn/Fe] (202 aa).

Residues His26, His80, Asp163, and His167 each coordinate Fe(3+). Residues His26, His80, Asp163, and His167 each coordinate Mn(2+).

Belongs to the iron/manganese superoxide dismutase family. Homodimer. Requires Mn(2+) as cofactor. Fe(3+) is required as a cofactor.

The enzyme catalyses 2 superoxide + 2 H(+) = H2O2 + O2. In terms of biological role, destroys superoxide anion radicals which are normally produced within the cells and which are toxic to biological systems. Catalyzes the dismutation of superoxide anion radicals into O2 and H2O2 by successive reduction and oxidation of the transition metal ion at the active site. The protein is Superoxide dismutase [Mn/Fe] (sodB) of Methylomonas sp. (strain J).